Here is a 639-residue protein sequence, read N- to C-terminus: DNA gyrase subunit B (639 aa).

Basic and acidic residues predominate over residues 392–402 (QAEELTRRKSA). The tract at residues 392-416 (QAEELTRRKSALESTSLPGKLADCQ) is disordered. Residues 423–537 (SELFIVEGDS…AGYVYAAQPP (115 aa)) form the Toprim domain. The Mg(2+) site is built by E429, D502, and D504. K624 participates in a covalent cross-link: Glycyl lysine isopeptide (Lys-Gly) (interchain with G-Cter in SAMP2).

Belongs to the type II topoisomerase GyrB family. Heterotetramer, composed of two GyrA and two GyrB chains. In the heterotetramer, GyrA contains the active site tyrosine that forms a transient covalent intermediate with DNA, while GyrB binds cofactors and catalyzes ATP hydrolysis. The cofactor is Mg(2+). Mn(2+) is required as a cofactor. Requires Ca(2+) as cofactor.

The protein resides in the cytoplasm. The catalysed reaction is ATP-dependent breakage, passage and rejoining of double-stranded DNA.. In terms of biological role, a type II topoisomerase that negatively supercoils closed circular double-stranded (ds) DNA in an ATP-dependent manner to modulate DNA topology and maintain chromosomes in an underwound state. Negative supercoiling favors strand separation, and DNA replication, transcription, recombination and repair, all of which involve strand separation. Also able to catalyze the interconversion of other topological isomers of dsDNA rings, including catenanes and knotted rings. Type II topoisomerases break and join 2 DNA strands simultaneously in an ATP-dependent manner. The chain is DNA gyrase subunit B from Haloferax volcanii (strain ATCC 29605 / DSM 3757 / JCM 8879 / NBRC 14742 / NCIMB 2012 / VKM B-1768 / DS2) (Halobacterium volcanii).